We begin with the raw amino-acid sequence, 91 residues long: MEAPLVKCLDEILDSGAVGVICADKDGLALHSAGQVQLRAAGVITALASLAKQIDPSCDTTPTIHLESDSLDVYIQQKEQVSLAVYSTPKK.

The protein belongs to the LAMTOR5 family. Part of the Ragulator complex.

Its subcellular location is the cytoplasm. It is found in the lysosome. In terms of biological role, regulator of the TOR pathway, a signaling cascade that promotes cell growth in response to growth factors, energy levels, and amino acids. As part of the Ragulator complex, may activate the TOR signaling cascade in response to amino acids. In Ixodes scapularis (Black-legged tick), this protein is Ragulator complex protein LAMTOR5 homolog.